We begin with the raw amino-acid sequence, 261 residues long: Ribonuclease HII (261 aa).

Residues 71-259 form the RNase H type-2 domain; sequence KYIAGVDEVG…VKEAKLHFDS (189 aa). Residues D77, E78, and D169 each contribute to the a divalent metal cation site.

It belongs to the RNase HII family. The cofactor is Mn(2+). Mg(2+) serves as cofactor.

Its subcellular location is the cytoplasm. It carries out the reaction Endonucleolytic cleavage to 5'-phosphomonoester.. Functionally, endonuclease that specifically degrades the RNA of RNA-DNA hybrids. This is Ribonuclease HII from Listeria monocytogenes serotype 4a (strain HCC23).